Consider the following 566-residue polypeptide: Urease subunit beta (566 aa).

In terms of domain architecture, Urease spans 129–566; sequence GGIDTHIHFI…VPMARRYFMF (438 aa). Residues His-134, His-136, and Lys-217 each coordinate Ni(2+). Lys-217 is subject to N6-carboxylysine. Residue His-219 participates in substrate binding. The Ni(2+) site is built by His-246 and His-272. Catalysis depends on His-320, which acts as the Proton donor. Position 360 (Asp-360) interacts with Ni(2+).

This sequence belongs to the metallo-dependent hydrolases superfamily. Urease alpha subunit family. In terms of assembly, heterohexamer of 3 UreA (alpha) and 3 UreB (beta) subunits. Ni cation serves as cofactor. Carboxylation allows a single lysine to coordinate two nickel ions.

It localises to the cytoplasm. The catalysed reaction is urea + 2 H2O + H(+) = hydrogencarbonate + 2 NH4(+). It functions in the pathway nitrogen metabolism; urea degradation; CO(2) and NH(3) from urea (urease route): step 1/1. In Aliarcobacter butzleri (strain RM4018) (Arcobacter butzleri), this protein is Urease subunit beta.